Consider the following 137-residue polypeptide: Large ribosomal subunit protein bL17 (137 aa).

Belongs to the bacterial ribosomal protein bL17 family. Part of the 50S ribosomal subunit. Contacts protein L32.

The sequence is that of Large ribosomal subunit protein bL17 from Caulobacter sp. (strain K31).